A 130-amino-acid polypeptide reads, in one-letter code: Small ribosomal subunit protein uS11 (130 aa).

Residues 1-15 show a composition bias toward basic residues; it reads MARPTKKSGPRKQKR. The tract at residues 1–21 is disordered; sequence MARPTKKSGPRKQKRNVPSGV.

It belongs to the universal ribosomal protein uS11 family. As to quaternary structure, part of the 30S ribosomal subunit. Interacts with proteins S7 and S18. Binds to IF-3.

Its function is as follows. Located on the platform of the 30S subunit, it bridges several disparate RNA helices of the 16S rRNA. Forms part of the Shine-Dalgarno cleft in the 70S ribosome. The chain is Small ribosomal subunit protein uS11 from Synechococcus elongatus (strain ATCC 33912 / PCC 7942 / FACHB-805) (Anacystis nidulans R2).